Here is a 90-residue protein sequence, read N- to C-terminus: WAP four-disulfide core domain protein 12 (90 aa).

A signal peptide spans 1 to 23; the sequence is MGSSSFLVLMVSLALVTLVAVEG. The region spanning 27–74 is the WAP domain; sequence GIEKAGVCPADNVRCFKSDPPQCHTDQDCLGERKCCYLHCGFKCVIPV. Disulfide bonds link C34–C62, C41–C66, C49–C61, and C55–C70.

It is found in the secreted. Antibacterial protein. Putative acid-stable proteinase inhibitor. This Pongo abelii (Sumatran orangutan) protein is WAP four-disulfide core domain protein 12 (WFDC12).